The sequence spans 155 residues: 3-hydroxyacyl-[acyl-carrier-protein] dehydratase FabZ (155 aa).

Residue histidine 54 is part of the active site.

The protein belongs to the thioester dehydratase family. FabZ subfamily.

Its subcellular location is the cytoplasm. The enzyme catalyses a (3R)-hydroxyacyl-[ACP] = a (2E)-enoyl-[ACP] + H2O. In terms of biological role, involved in unsaturated fatty acids biosynthesis. Catalyzes the dehydration of short chain beta-hydroxyacyl-ACPs and long chain saturated and unsaturated beta-hydroxyacyl-ACPs. This is 3-hydroxyacyl-[acyl-carrier-protein] dehydratase FabZ from Burkholderia lata (strain ATCC 17760 / DSM 23089 / LMG 22485 / NCIMB 9086 / R18194 / 383).